The following is a 56-amino-acid chain: uncharacterized protein (56 aa).

This is an uncharacterized protein from Escherichia coli (Bacteriophage T4).